The chain runs to 372 residues: Dual-specificity RNA methyltransferase RlmN (372 aa).

Glu93 acts as the Proton acceptor in catalysis. The 240-residue stretch at 99–338 folds into the Radical SAM core domain; that stretch reads EKDRATLCIS…VTVRKTRGDD (240 aa). The cysteines at positions 106 and 343 are disulfide-linked. Cys113, Cys117, and Cys120 together coordinate [4Fe-4S] cluster. Residues 167 to 168, Ser199, 221 to 223, and Asn300 contribute to the S-adenosyl-L-methionine site; these read GE and SLH. The active-site S-methylcysteine intermediate is Cys343.

Belongs to the radical SAM superfamily. RlmN family. The cofactor is [4Fe-4S] cluster.

Its subcellular location is the cytoplasm. The enzyme catalyses adenosine(2503) in 23S rRNA + 2 reduced [2Fe-2S]-[ferredoxin] + 2 S-adenosyl-L-methionine = 2-methyladenosine(2503) in 23S rRNA + 5'-deoxyadenosine + L-methionine + 2 oxidized [2Fe-2S]-[ferredoxin] + S-adenosyl-L-homocysteine. It carries out the reaction adenosine(37) in tRNA + 2 reduced [2Fe-2S]-[ferredoxin] + 2 S-adenosyl-L-methionine = 2-methyladenosine(37) in tRNA + 5'-deoxyadenosine + L-methionine + 2 oxidized [2Fe-2S]-[ferredoxin] + S-adenosyl-L-homocysteine. Functionally, specifically methylates position 2 of adenine 2503 in 23S rRNA and position 2 of adenine 37 in tRNAs. m2A2503 modification seems to play a crucial role in the proofreading step occurring at the peptidyl transferase center and thus would serve to optimize ribosomal fidelity. The sequence is that of Dual-specificity RNA methyltransferase RlmN from Psychromonas ingrahamii (strain DSM 17664 / CCUG 51855 / 37).